Here is a 440-residue protein sequence, read N- to C-terminus: Transposon Ty1-GR2 Gag polyprotein (440 aa).

The span at 1-16 (MESQQLSQHSHISHGS) shows a compositional bias: low complexity. 3 disordered regions span residues 1–93 (MESQ…MMTQ), 126–173 (PQSQ…RPPP), and 352–440 (GSRN…PGTY). Composition is skewed to polar residues over residues 48–60 (TKAN…TPAS) and 127–152 (QSQF…GNTF). Low complexity predominate over residues 153–165 (TDSSSADSDMTST). The interval 299–401 (NNGIHINNKV…NSKSKTARAH (103 aa)) is RNA-binding. Over residues 402 to 418 (NVSTSNNSPSTDNDSIS) the composition is skewed to low complexity. Position 416 is a phosphoserine (S416). Residues 419 to 428 (KSTTEPIQLN) are compositionally biased toward polar residues. Residues 429 to 440 (NKHDLHLRPGTY) show a composition bias toward basic and acidic residues.

Homotrimer.

It is found in the cytoplasm. Capsid protein (CA) is the structural component of the virus-like particle (VLP), forming the shell that encapsulates the retrotransposons dimeric RNA genome. The particles are assembled from trimer-clustered units and there are holes in the capsid shells that allow for the diffusion of macromolecules. CA also has nucleocapsid-like chaperone activity, promoting primer tRNA(i)-Met annealing to the multipartite primer-binding site (PBS), dimerization of Ty1 RNA and initiation of reverse transcription. The polypeptide is Transposon Ty1-GR2 Gag polyprotein (TY1A-GR2) (Saccharomyces cerevisiae (strain ATCC 204508 / S288c) (Baker's yeast)).